The sequence spans 214 residues: Transcriptional activator protein ExaE (214 aa).

The 117-residue stretch at 2–118 (GILLVDDHPM…VVLEAVRRVL (117 aa)) folds into the Response regulatory domain. Residue Asp53 is modified to 4-aspartylphosphate. The HTH luxR-type domain occupies 143–208 (GNARLQGLTQ…ELVHLAIEAG (66 aa)). The segment at residues 167–186 (TRLIAQQLCISAKTVSNYLT) is a DNA-binding region (H-T-H motif).

In terms of biological role, positive regulator of the expression of the gene qedA and the activity of ADH I but does not affect the activities of ADH IIB or ADH IIG. This is Transcriptional activator protein ExaE from Pseudomonas putida (Arthrobacter siderocapsulatus).